The chain runs to 710 residues: MLDGPLFSEGPDSPRELQDEESGSCLWVQKSKLLVIEVKTISCHYSRRAPSRQSMDIQASYWARGPQSRTCRLRPGSPEPPPRRPWASRVLQEATNWRAGPPAEVRAREQEKRKAASQEREAKETERKRRKAGGARRSPLGQPRPEPRNALRAAQPTGFPVFSRPERFGQVGRAPRPSVLPQGDPGVAWAGPWGGRRPGPPSYEAHLLLRGSAGTAPRRRWDRPPPYVAPPSYEGPHRTLGTKRGPELSRAPTSSAPVPATTRTEGGRTKKRLDPRIYRDVLGAWGLRQGRGLLGGAPGCTAARARPESCKGAIEKSSGLVAAGLNSAGDSHSQGKTTGGPGTDAALSRSAISSPPRPVPRSRQHLRGSRKGKEGSEQIWLPTCWLASPKKPPVRHSQTLPRPWAPGGTGWKESLGQREGAEHETLEVWKVTRRAHTLPRISRGPAGREGIFVIDATCVVIKSQYVPTPRTQQGQLVPSGESCSVSDSLSQPKPCHEEEGEGAAANPSVCQKRLLSSRVLNQPSEGRECEAEVGQQGDSSLEERSSSGLGFPVGEVNPRDAPTQPGSQEHPTLGPAAPVCAGSLKGSEAAGVPRRAGGGWARTPGPYAGALREAVSRIRRHTAPDSDSDEAEDLSVHSGSSDGSDTDAPGASWRNERTLPALGNTRPREGGKTAGLSDSIREIVDVISQTEEGFIREDTRKTPQGNRERE.

Disordered regions lie at residues 1-22 (MLDG…DEES), 62-195 (WARG…PWGG), 213-274 (AGTA…KRLD), and 324-375 (GLNS…GKEG). The stretch at 103–134 (AEVRAREQEKRKAASQEREAKETERKRRKAGG) forms a coiled coil. Residues 105–127 (VRAREQEKRKAASQEREAKETER) are compositionally biased toward basic and acidic residues. The segment at 113-131 (RKAASQEREAKETERKRRK) is nuclear localization. Residues 186–236 (GVAWAGPWGGRRPGPPSYEAHLLLRGSAGTAPRRRWDRPPPYVAPPSYEGP) form an interaction with MAGI2 region. The span at 265 to 274 (EGGRTKKRLD) shows a compositional bias: basic and acidic residues. Residues 341 to 435 (PGTDAALSRS…LEVWKVTRRA (95 aa)) form an interaction with ACTN1 region. The segment covering 360–370 (PRSRQHLRGSR) has biased composition (basic residues). Ser388 is modified (phosphoserine). Disordered regions lie at residues 390–422 (KKPP…EGAE), 469–508 (PRTQ…ANPS), and 521–710 (NQPS…RERE). Positions 407–708 (GGTGWKESLG…TRKTPQGNRE (302 aa)) are interaction with CD2AP and NPHS1. Positions 469-491 (PRTQQGQLVPSGESCSVSDSLSQ) are enriched in polar residues. Positions 693–710 (GFIREDTRKTPQGNRERE) are enriched in basic and acidic residues.

Forms a ternary complex with MAGI2 and SH3KBP1; recruits DDN to the cytoplasm. Interacts with MAGI1. Interacts with ACTN1 and may interact with WWC1. Interacts with the podocyte slit diaphragm proteins CD2AP, NPHS1 and NPHS2; the interaction with CD2AP and NPHS1 is direct. In terms of tissue distribution, two forms of 81 kDa and 89 kDa are expressed in brain. The 81 kDa form is the only one found in kidney podocytes.

It localises to the cell projection. Its subcellular location is the dendritic spine membrane. The protein resides in the cytoplasm. The protein localises to the endoplasmic reticulum membrane. It is found in the perikaryon. It localises to the nucleus. Functionally, promotes apoptosis of kidney glomerular podocytes. Podocytes are highly specialized cells essential to the ultrafiltration of blood, resulting in the extraction of urine and the retention of protein. The polypeptide is Dendrin (Ddn) (Mus musculus (Mouse)).